The chain runs to 86 residues: Small ribosomal subunit protein uS17 (86 aa).

The protein belongs to the universal ribosomal protein uS17 family. Part of the 30S ribosomal subunit.

Its function is as follows. One of the primary rRNA binding proteins, it binds specifically to the 5'-end of 16S ribosomal RNA. In Dehalococcoides mccartyi (strain ATCC BAA-2266 / KCTC 15142 / 195) (Dehalococcoides ethenogenes (strain 195)), this protein is Small ribosomal subunit protein uS17.